A 211-amino-acid polypeptide reads, in one-letter code: Suppressor of RNA silencing p3 (211 aa).

Belongs to the tenuiviruses p3 protein family. As to quaternary structure, homodimer.

The protein resides in the host cytoplasm. Acts as a suppressor of RNA-mediated gene silencing, also known as post-transcriptional gene silencing (PTGS), presumably through the binding of dsRNA. The chain is Suppressor of RNA silencing p3 from Avena sativa (Oat).